Here is a 415-residue protein sequence, read N- to C-terminus: Histidine--tRNA ligase (415 aa).

The protein belongs to the class-II aminoacyl-tRNA synthetase family. As to quaternary structure, homodimer.

Its subcellular location is the cytoplasm. It carries out the reaction tRNA(His) + L-histidine + ATP = L-histidyl-tRNA(His) + AMP + diphosphate + H(+). In Rickettsia felis (strain ATCC VR-1525 / URRWXCal2) (Rickettsia azadi), this protein is Histidine--tRNA ligase.